The following is a 285-amino-acid chain: Putative sugar uptake protein lp_2503 (285 aa).

The next 9 membrane-spanning stretches (helical) occupy residues glycine 2–glycine 21, threonine 31–valine 48, serine 55–glutamine 72, glycine 112–leucine 134, asparagine 147–valine 169, valine 179–phenylalanine 196, asparagine 209–alanine 228, alanine 233–glycine 255, and valine 264–methionine 283.

The protein belongs to the GRP transporter (TC 2.A.7.5) family.

It is found in the cell membrane. The sequence is that of Putative sugar uptake protein lp_2503 from Lactiplantibacillus plantarum (strain ATCC BAA-793 / NCIMB 8826 / WCFS1) (Lactobacillus plantarum).